A 470-amino-acid polypeptide reads, in one-letter code: Proton-coupled amino acid transporter 3 (470 aa).

Residues methionine 1–glutamine 46 are Cytoplasmic-facing. Polar residues predominate over residues serine 10–glutamine 20. The tract at residues serine 10–asparagine 33 is disordered. Residues serine 21 to serine 31 are compositionally biased toward low complexity. The chain crosses the membrane as a helical span at residues threonine 47 to isoleucine 67. Residues lysine 68 to glycine 71 lie on the Extracellular side of the membrane. Residues leucine 72 to isoleucine 92 traverse the membrane as a helical segment. At leucine 93–threonine 137 the chain is on the cytoplasmic side. A helical membrane pass occupies residues valine 138–alanine 158. Topologically, residues aspartate 159–proline 185 are extracellular. The helical transmembrane segment at isoleucine 186–isoleucine 206 threads the bilayer. At glutamine 207–lysine 210 the chain is on the cytoplasmic side. Residues valine 211–phenylalanine 231 traverse the membrane as a helical segment. Over glutamate 232 to threonine 252 the chain is Extracellular. Residues phenylalanine 253 to leucine 273 traverse the membrane as a helical segment. The Cytoplasmic portion of the chain corresponds to lysine 274–serine 284. Residues phenylalanine 285 to glycine 305 traverse the membrane as a helical segment. Over tyrosine 306–glycine 337 the chain is Extracellular. A helical transmembrane segment spans residues isoleucine 338–isoleucine 358. Residues serine 359–leucine 367 lie on the Cytoplasmic side of the membrane. Residues phenylalanine 368–isoleucine 388 form a helical membrane-spanning segment. Topologically, residues proline 389–aspartate 392 are extracellular. The chain crosses the membrane as a helical span at residues leucine 393–leucine 413. Topologically, residues leucine 414 to serine 425 are cytoplasmic. A helical membrane pass occupies residues cysteine 426–glycine 446. Topologically, residues threonine 447–alanine 470 are extracellular.

Belongs to the amino acid/polyamine transporter 2 family. In terms of tissue distribution, specifically expressed in testis.

The protein resides in the membrane. The protein is Proton-coupled amino acid transporter 3 (SLC36A3) of Homo sapiens (Human).